Consider the following 436-residue polypeptide: Enolase (436 aa).

Glutamine 167 contacts (2R)-2-phosphoglycerate. The Proton donor role is filled by glutamate 209. The Mg(2+) site is built by aspartate 246, glutamate 291, and aspartate 318. Positions 343, 372, 373, and 394 each coordinate (2R)-2-phosphoglycerate. Lysine 343 (proton acceptor) is an active-site residue.

Belongs to the enolase family. As to quaternary structure, component of the RNA degradosome, a multiprotein complex involved in RNA processing and mRNA degradation. The cofactor is Mg(2+).

The protein resides in the cytoplasm. It localises to the secreted. The protein localises to the cell surface. The catalysed reaction is (2R)-2-phosphoglycerate = phosphoenolpyruvate + H2O. It functions in the pathway carbohydrate degradation; glycolysis; pyruvate from D-glyceraldehyde 3-phosphate: step 4/5. Catalyzes the reversible conversion of 2-phosphoglycerate (2-PG) into phosphoenolpyruvate (PEP). It is essential for the degradation of carbohydrates via glycolysis. The polypeptide is Enolase (Actinobacillus pleuropneumoniae serotype 3 (strain JL03)).